Here is a 202-residue protein sequence, read N- to C-terminus: Ion-translocating oxidoreductase complex subunit G (202 aa).

A helical membrane pass occupies residues 11-31 (ACLMGFFSFFSLSSVIFVKNI). T176 carries the post-translational modification FMN phosphoryl threonine.

This sequence belongs to the RnfG family. The complex is composed of six subunits: RnfA, RnfB, RnfC, RnfD, RnfE and RnfG. The cofactor is FMN.

It is found in the cell inner membrane. In terms of biological role, part of a membrane-bound complex that couples electron transfer with translocation of ions across the membrane. The chain is Ion-translocating oxidoreductase complex subunit G from Buchnera aphidicola subsp. Schizaphis graminum (strain Sg).